The primary structure comprises 409 residues: WW domain-containing oxidoreductase (409 aa).

The segment at 1–23 is disordered; that stretch reads MIALPDTDSEDELPPGWEERATD. WW domains lie at 11–44 and 52–86; these read DELP…HPRT and GELP…DPRL. 128 to 134 provides a ligand contact to NADP(+); the sequence is GANCGIG. Ser-257 is a binding site for substrate. The active-site Proton acceptor is the Tyr-288.

Belongs to the short-chain dehydrogenases/reductases (SDR) family.

The protein localises to the cytoplasm. The protein resides in the mitochondrion. It localises to the golgi apparatus. Its subcellular location is the lysosome. Its function is as follows. Putative oxidoreductase. May control genotoxic stress-induced cell death. May play a role in TGFB1 signaling and TGFB1-mediated cell death. May also play a role in tumor necrosis factor (TNF)-mediated cell death. May play a role in Wnt signaling. This chain is WW domain-containing oxidoreductase (Wwox), found in Drosophila melanogaster (Fruit fly).